Consider the following 467-residue polypeptide: Glutamate--tRNA ligase (467 aa).

The 'HIGH' region motif lies at 9–19 (PSPTGFLHIGG). The 'KMSKS' region signature appears at 250-254 (KLSKR). K253 is a binding site for ATP.

It belongs to the class-I aminoacyl-tRNA synthetase family. Glutamate--tRNA ligase type 1 subfamily. In terms of assembly, monomer.

It is found in the cytoplasm. It catalyses the reaction tRNA(Glu) + L-glutamate + ATP = L-glutamyl-tRNA(Glu) + AMP + diphosphate. Functionally, catalyzes the attachment of glutamate to tRNA(Glu) in a two-step reaction: glutamate is first activated by ATP to form Glu-AMP and then transferred to the acceptor end of tRNA(Glu). This chain is Glutamate--tRNA ligase, found in Mesomycoplasma hyopneumoniae (strain 232) (Mycoplasma hyopneumoniae).